Reading from the N-terminus, the 277-residue chain is MIIELAKNYGFCFGVKRAIKKAEQIKDAATIGPLIHNNEEISRLQKNFNVKTLENIQALSNEKKAIIRTHGITKQDLEELRKKDIEIFDATCPFVTKPQQICEQMSKEGYEVVIFGDENHPEVKGVKSYVSTKAYVVLDKKELQNIKLPNKIAVVSQTTKKPEHFMEIVNFLILKTKEVRVFNTICDATFKNQDAIKELSLKSDVMVVVGGKNSANTKQLFLIAKTNCEDSYLIETEEELKKEWFLDKKHCGISAGASTPDWIIQKVIAKIENFRIN.

C12 serves as a coordination point for [4Fe-4S] cluster. Residues H36 and H70 each contribute to the (2E)-4-hydroxy-3-methylbut-2-enyl diphosphate site. Residues H36 and H70 each contribute to the dimethylallyl diphosphate site. Positions 36 and 70 each coordinate isopentenyl diphosphate. C92 is a [4Fe-4S] cluster binding site. (2E)-4-hydroxy-3-methylbut-2-enyl diphosphate is bound at residue H120. Dimethylallyl diphosphate is bound at residue H120. H120 is an isopentenyl diphosphate binding site. E122 serves as the catalytic Proton donor. T158 serves as a coordination point for (2E)-4-hydroxy-3-methylbut-2-enyl diphosphate. C186 contacts [4Fe-4S] cluster. S214, N216, and S258 together coordinate (2E)-4-hydroxy-3-methylbut-2-enyl diphosphate. Dimethylallyl diphosphate-binding residues include S214, N216, and S258. S214, N216, and S258 together coordinate isopentenyl diphosphate.

The protein belongs to the IspH family. [4Fe-4S] cluster is required as a cofactor.

It carries out the reaction isopentenyl diphosphate + 2 oxidized [2Fe-2S]-[ferredoxin] + H2O = (2E)-4-hydroxy-3-methylbut-2-enyl diphosphate + 2 reduced [2Fe-2S]-[ferredoxin] + 2 H(+). The enzyme catalyses dimethylallyl diphosphate + 2 oxidized [2Fe-2S]-[ferredoxin] + H2O = (2E)-4-hydroxy-3-methylbut-2-enyl diphosphate + 2 reduced [2Fe-2S]-[ferredoxin] + 2 H(+). The protein operates within isoprenoid biosynthesis; dimethylallyl diphosphate biosynthesis; dimethylallyl diphosphate from (2E)-4-hydroxy-3-methylbutenyl diphosphate: step 1/1. It participates in isoprenoid biosynthesis; isopentenyl diphosphate biosynthesis via DXP pathway; isopentenyl diphosphate from 1-deoxy-D-xylulose 5-phosphate: step 6/6. Catalyzes the conversion of 1-hydroxy-2-methyl-2-(E)-butenyl 4-diphosphate (HMBPP) into a mixture of isopentenyl diphosphate (IPP) and dimethylallyl diphosphate (DMAPP). Acts in the terminal step of the DOXP/MEP pathway for isoprenoid precursor biosynthesis. This is 4-hydroxy-3-methylbut-2-enyl diphosphate reductase from Campylobacter jejuni subsp. jejuni serotype O:2 (strain ATCC 700819 / NCTC 11168).